A 127-amino-acid chain; its full sequence is Large ribosomal subunit protein bL19 (127 aa).

It belongs to the bacterial ribosomal protein bL19 family.

Functionally, this protein is located at the 30S-50S ribosomal subunit interface and may play a role in the structure and function of the aminoacyl-tRNA binding site. The sequence is that of Large ribosomal subunit protein bL19 from Roseobacter denitrificans (strain ATCC 33942 / OCh 114) (Erythrobacter sp. (strain OCh 114)).